A 220-amino-acid polypeptide reads, in one-letter code: PKHD-type hydroxylase sync_1544 (220 aa).

Positions 79 to 173 (KLHRFLISKT…RTVCVGWIES (95 aa)) constitute a Fe2OG dioxygenase domain. His-97, Asp-99, and His-154 together coordinate Fe cation. Position 164 (Arg-164) interacts with 2-oxoglutarate.

The cofactor is Fe(2+). L-ascorbate serves as cofactor.

In Synechococcus sp. (strain CC9311), this protein is PKHD-type hydroxylase sync_1544.